Here is a 365-residue protein sequence, read N- to C-terminus: MSGNSFGKLFTVTTFGESHGIAIGGVVDGCPPGLEITEEDLQVDLDRRKPGTSRYTTARREDDEVQILSGVFEGKTTGTSIGLLIKNKDQRSQDYGNIKDRFRPGHADYTYDQKYGSRDYRGGGRSSARETAIRVAAGGIAKKYLKEVHGIEVLGYLSQLGPVTVDKVDHSVTNTNPFFCPDESKLDALDEYMRDLKKSGDSIGAKVSVVAKNVPVGLGEPVFDRLDAEIAHAMMGINAVKGVEIGDGFDVINQKGSEHRDTLTPEGFSSNHAGGVLGGISTGQDIEVHMALKPTSSISVPGKTINKDNEEIDIVTKGRHDPCVGIRAVPIAEAMLALVLMDHLLRHRAQNTGVLSTTKPIAGQA.

NADP(+) contacts are provided by Arg-48 and Arg-54. Residues 125–127 (RSS), 238–239 (NA), Gly-278, 293–297 (KPTSS), and Arg-319 contribute to the FMN site.

This sequence belongs to the chorismate synthase family. Homotetramer. The cofactor is FMNH2.

The enzyme catalyses 5-O-(1-carboxyvinyl)-3-phosphoshikimate = chorismate + phosphate. It functions in the pathway metabolic intermediate biosynthesis; chorismate biosynthesis; chorismate from D-erythrose 4-phosphate and phosphoenolpyruvate: step 7/7. In terms of biological role, catalyzes the anti-1,4-elimination of the C-3 phosphate and the C-6 proR hydrogen from 5-enolpyruvylshikimate-3-phosphate (EPSP) to yield chorismate, which is the branch point compound that serves as the starting substrate for the three terminal pathways of aromatic amino acid biosynthesis. This reaction introduces a second double bond into the aromatic ring system. The chain is Chorismate synthase from Alteromonas mediterranea (strain DSM 17117 / CIP 110805 / LMG 28347 / Deep ecotype).